Consider the following 463-residue polypeptide: Phosphomannomutase (463 aa).

Ser103 serves as the catalytic Phosphoserine intermediate. Mg(2+) is bound by residues Ser103, Asp248, Asp250, and Asp252.

The protein belongs to the phosphohexose mutase family. It depends on Mg(2+) as a cofactor.

The protein localises to the cell membrane. The enzyme catalyses alpha-D-mannose 1-phosphate = D-mannose 6-phosphate. Its pathway is nucleotide-sugar biosynthesis; GDP-alpha-D-mannose biosynthesis; alpha-D-mannose 1-phosphate from D-fructose 6-phosphate: step 2/2. The protein operates within bacterial outer membrane biogenesis; LPS O-antigen biosynthesis. Involved in GDP-mannose biosynthesis which serves as the activated sugar nucleotide precursor for mannose residues in cell surface polysaccharides. The sequence is that of Phosphomannomutase (rfbB) from Vibrio cholerae serotype O1 (strain ATCC 39315 / El Tor Inaba N16961).